The primary structure comprises 224 residues: Envelope glycoprotein L (224 aa).

An N-terminal signal peptide occupies residues 1–22 (MGILGWVGLIAVGVLCVRGGLS). The segment at 20–161 (GLSSTEYVIR…FDYSRTRRCV (142 aa)) is interaction with gH. The interaction with gL stretch occupies residues 20-161 (GLSSTEYVIR…FDYSRTRRCV (142 aa)). The region spanning 23–201 (STEYVIRSRV…LTTPPPIIAT (179 aa)) is the gL alphaherpesvirus-type domain. Disulfide bonds link C44-C76 and C149-C160. Positions 161 to 224 (VGRQDLGPTN…RRRRPHSRRL (64 aa)) are disordered. N170 carries N-linked (GlcNAc...) asparagine; by host glycosylation. Residues 213-224 (KSRRRRPHSRRL) show a composition bias toward basic residues.

It belongs to the herpesviridae glycoprotein L (gL) family. Alphaherpesvirinae gL subfamily. In terms of assembly, interacts with glycoprotein H (gH); this interaction is necessary for the correct processing and cell surface expression of gH. The heterodimer gH/gL seems to interact with gB trimers during fusion. In terms of processing, N-glycosylated, O-glycosylated, and sialylated.

The protein localises to the virion membrane. It localises to the host cell membrane. The protein resides in the host Golgi apparatus. Its subcellular location is the host trans-Golgi network. The heterodimer glycoprotein H-glycoprotein L is required for the fusion of viral and plasma membranes leading to virus entry into the host cell. Acts as a functional inhibitor of gH and maintains gH in an inhibited form. Upon binding to host integrins, gL dissociates from gH leading to activation of the viral fusion glycoproteins gB and gH. This is Envelope glycoprotein L from Human herpesvirus 1 (strain KOS) (HHV-1).